A 34-amino-acid chain; its full sequence is Photosystem II reaction center protein T (34 aa).

Residues 3–23 (SVAYILIFTLTIGTLFFAVAF) form a helical membrane-spanning segment.

It belongs to the PsbT family. In terms of assembly, PSII is composed of 1 copy each of membrane proteins PsbA, PsbB, PsbC, PsbD, PsbE, PsbF, PsbH, PsbI, PsbJ, PsbK, PsbL, PsbM, PsbT, PsbX, PsbY, PsbZ, Psb30/Ycf12, peripheral proteins PsbO, CyanoQ (PsbQ), PsbU, PsbV and a large number of cofactors. It forms dimeric complexes.

Its subcellular location is the cellular thylakoid membrane. Functionally, found at the monomer-monomer interface of the photosystem II (PS II) dimer, plays a role in assembly and dimerization of PSII. PSII is a light-driven water plastoquinone oxidoreductase, using light energy to abstract electrons from H(2)O, generating a proton gradient subsequently used for ATP formation. The protein is Photosystem II reaction center protein T of Mastigocladus laminosus (Fischerella sp.).